A 685-amino-acid chain; its full sequence is Threonine--tRNA ligase (685 aa).

Residues 1–28 (MTSPAPEHSAAPLRVPAGTTAGTAVREA) form a disordered region. One can recognise a TGS domain in the interval 1–65 (MTSPAPEHSA…EVDVDVEPVA (65 aa)). Residues 262 to 568 (DHRKLGTELD…LTEHYAGAFP (307 aa)) form a catalytic region. Positions 367, 418, and 545 each coordinate Zn(2+).

It belongs to the class-II aminoacyl-tRNA synthetase family. Homodimer. Zn(2+) is required as a cofactor.

The protein resides in the cytoplasm. The catalysed reaction is tRNA(Thr) + L-threonine + ATP = L-threonyl-tRNA(Thr) + AMP + diphosphate + H(+). In terms of biological role, catalyzes the attachment of threonine to tRNA(Thr) in a two-step reaction: L-threonine is first activated by ATP to form Thr-AMP and then transferred to the acceptor end of tRNA(Thr). Also edits incorrectly charged L-seryl-tRNA(Thr). This Rhodococcus erythropolis (strain PR4 / NBRC 100887) protein is Threonine--tRNA ligase.